The chain runs to 185 residues: Elongation factor P (185 aa).

Belongs to the elongation factor P family.

The protein localises to the cytoplasm. The protein operates within protein biosynthesis; polypeptide chain elongation. In terms of biological role, involved in peptide bond synthesis. Stimulates efficient translation and peptide-bond synthesis on native or reconstituted 70S ribosomes in vitro. Probably functions indirectly by altering the affinity of the ribosome for aminoacyl-tRNA, thus increasing their reactivity as acceptors for peptidyl transferase. This Syntrophomonas wolfei subsp. wolfei (strain DSM 2245B / Goettingen) protein is Elongation factor P.